A 49-amino-acid polypeptide reads, in one-letter code: MATAVYRCAKCGKEVELDLATAREVRCPYCGSKILYKPRPRVARRVKAI.

Positions 11, 27, and 30 each coordinate Zn(2+).

Belongs to the archaeal Rpo12/eukaryotic RPC10 RNA polymerase subunit family. Part of the RNA polymerase complex. The cofactor is Zn(2+).

The protein localises to the cytoplasm. It is found in the chromosome. The catalysed reaction is RNA(n) + a ribonucleoside 5'-triphosphate = RNA(n+1) + diphosphate. DNA-dependent RNA polymerase (RNAP) catalyzes the transcription of DNA into RNA using the four ribonucleoside triphosphates as substrates. This is DNA-directed RNA polymerase subunit Rpo12 from Thermococcus kodakarensis (strain ATCC BAA-918 / JCM 12380 / KOD1) (Pyrococcus kodakaraensis (strain KOD1)).